The following is an 80-amino-acid chain: Sec-independent protein translocase protein TatA (80 aa).

Residues 1 to 21 traverse the membrane as a helical segment; sequence MGQIGIWQILIIALVILVLFG. Residues 38–80 are disordered; sequence SFKKGLNEEDKPAEPAAKIEGPSHEAKPAGEAAKDPRPADKQG. The segment covering 58–80 has biased composition (basic and acidic residues); sequence GPSHEAKPAGEAAKDPRPADKQG.

Belongs to the TatA/E family. In terms of assembly, the Tat system comprises two distinct complexes: a TatABC complex, containing multiple copies of TatA, TatB and TatC subunits, and a separate TatA complex, containing only TatA subunits. Substrates initially bind to the TatABC complex, which probably triggers association of the separate TatA complex to form the active translocon.

It is found in the cell inner membrane. Its function is as follows. Part of the twin-arginine translocation (Tat) system that transports large folded proteins containing a characteristic twin-arginine motif in their signal peptide across membranes. TatA could form the protein-conducting channel of the Tat system. This chain is Sec-independent protein translocase protein TatA, found in Erythrobacter litoralis (strain HTCC2594).